A 154-amino-acid chain; its full sequence is 6,7-dimethyl-8-ribityllumazine synthase (154 aa).

5-amino-6-(D-ribitylamino)uracil-binding positions include Phe-22, 56–58, and 80–82; these read AFE and TVI. 85-86 provides a ligand contact to (2S)-2-hydroxy-3-oxobutyl phosphate; the sequence is AT. His-88 (proton donor) is an active-site residue. Phe-113 is a 5-amino-6-(D-ribitylamino)uracil binding site. Arg-127 provides a ligand contact to (2S)-2-hydroxy-3-oxobutyl phosphate.

This sequence belongs to the DMRL synthase family. As to quaternary structure, forms an icosahedral capsid composed of 60 subunits, arranged as a dodecamer of pentamers.

It catalyses the reaction (2S)-2-hydroxy-3-oxobutyl phosphate + 5-amino-6-(D-ribitylamino)uracil = 6,7-dimethyl-8-(1-D-ribityl)lumazine + phosphate + 2 H2O + H(+). It functions in the pathway cofactor biosynthesis; riboflavin biosynthesis; riboflavin from 2-hydroxy-3-oxobutyl phosphate and 5-amino-6-(D-ribitylamino)uracil: step 1/2. Functionally, catalyzes the formation of 6,7-dimethyl-8-ribityllumazine by condensation of 5-amino-6-(D-ribitylamino)uracil with 3,4-dihydroxy-2-butanone 4-phosphate. This is the penultimate step in the biosynthesis of riboflavin. In Bacillus pumilus (strain SAFR-032), this protein is 6,7-dimethyl-8-ribityllumazine synthase.